The sequence spans 185 residues: dTTP/UTP pyrophosphatase (185 aa).

Aspartate 67 serves as the catalytic Proton acceptor.

It belongs to the Maf family. YhdE subfamily. It depends on a divalent metal cation as a cofactor.

It localises to the cytoplasm. It carries out the reaction dTTP + H2O = dTMP + diphosphate + H(+). It catalyses the reaction UTP + H2O = UMP + diphosphate + H(+). Functionally, nucleoside triphosphate pyrophosphatase that hydrolyzes dTTP and UTP. May have a dual role in cell division arrest and in preventing the incorporation of modified nucleotides into cellular nucleic acids. The polypeptide is dTTP/UTP pyrophosphatase (Lacticaseibacillus casei (strain BL23) (Lactobacillus casei)).